Reading from the N-terminus, the 263-residue chain is Trans-aconitate 2-methyltransferase (263 aa).

The protein belongs to the methyltransferase superfamily. Tam family.

It is found in the cytoplasm. It carries out the reaction trans-aconitate + S-adenosyl-L-methionine = (E)-3-(methoxycarbonyl)pent-2-enedioate + S-adenosyl-L-homocysteine. Functionally, catalyzes the S-adenosylmethionine monomethyl esterification of trans-aconitate. This Mycobacterium ulcerans (strain Agy99) protein is Trans-aconitate 2-methyltransferase.